Here is a 764-residue protein sequence, read N- to C-terminus: Transient receptor potential cation channel subfamily V member 2 (764 aa).

A disordered region spans residues 1–46 (MTSPSSSPVFRLETLDGGQEDGSEADRGKLDFGSGLPPMESQFQGE). The tract at residues 1-388 (MTSPSSSPVF…LLQAKWDLLI (388 aa)) is required for interaction with SLC50A1. At 1–390 (MTSPSSSPVF…QAKWDLLIPK (390 aa)) the chain is on the cytoplasmic side. Ser-6 carries the post-translational modification Phosphoserine. ANK repeat units lie at residues 72 to 114 (NRFD…TEGS), 115 to 161 (TGKT…DDYY), 162 to 207 (RGHS…TCFY), 208 to 243 (FGEL…ATDS), 244 to 292 (QGNT…IRNL), and 293 to 319 (QDLT…REFS). The chain crosses the membrane as a helical span at residues 391–411 (FFLNFLCNLIYMFIFTAVAYH). Residues 412–434 (QPTLKKQAAPHLKAEVGNSMLLT) lie on the Extracellular side of the membrane. A helical transmembrane segment spans residues 435-455 (GHILILLGGIYLLVGQLWYFW). Residues 456 to 471 (RRHVFIWISFIDSYFE) lie on the Cytoplasmic side of the membrane. A helical transmembrane segment spans residues 472–492 (ILFLFQALLTVVSQVLCFLAI). Position 493 (Glu-493) is a topological domain, extracellular. A helical membrane pass occupies residues 494–514 (WYLPLLVSALVLGWLNLLYYT). The Cytoplasmic portion of the chain corresponds to 515-537 (RGFQHTGIYSVMIQKVILRDLLR). Residues 538–558 (FLLIYLVFLFGFAVALVSLSQ) form a helical membrane-spanning segment. The segment at 562–585 (RPEAPTGPNATESVQPMEGQEDEG) is disordered. The N-linked (GlcNAc...) asparagine glycan is linked to Asn-570. Positions 572 to 609 (TESVQPMEGQEDEGNGAQYRGILEASLELFKFTIGMGE) form an intramembrane region, pore-forming. A helical membrane pass occupies residues 622 to 642 (VLLLLLAYVLLTYILLLNMLI). At 643–764 (ALMSETVNSV…YVPVQLLQSN (122 aa)) the chain is on the cytoplasmic side. Residues 725–756 (PSGAGVPRTLENPVLASPPKEDEDGASEENYV) are disordered. A phosphoserine mark is found at Ser-751 and Ser-763.

The protein belongs to the transient receptor (TC 1.A.4) family. TrpV subfamily. TRPV2 sub-subfamily. As to quaternary structure, homotetramer. Interacts with a cAMP-dependent protein kinase type II regulatory subunit (PRKAR2A or PRKAR2B) and ACBD3. Interacts with SLC50A1; the interaction probably occurs intracellularly and depends on TRPV2 N-glycosylation. N-glycosylated. In terms of processing, phosphorylated by PKA.

The protein resides in the cell membrane. Its subcellular location is the cytoplasm. It localises to the melanosome. It catalyses the reaction Ca(2+)(in) = Ca(2+)(out). The enzyme catalyses Mg(2+)(in) = Mg(2+)(out). It carries out the reaction Na(+)(in) = Na(+)(out). The catalysed reaction is K(+)(in) = K(+)(out). Functionally, calcium-permeable, non-selective cation channel with an outward rectification. Seems to be regulated, at least in part, by IGF1, PDGF and neuropeptide head activator. May transduce physical stimuli in mast cells. Activated by temperatures higher than 52 degrees Celsius; is not activated by vanilloids and acidic pH. The polypeptide is Transient receptor potential cation channel subfamily V member 2 (TRPV2) (Homo sapiens (Human)).